We begin with the raw amino-acid sequence, 809 residues long: MASSLSSKAKTFKSPTKTPTKMYRKSYLSPSSTSLTPPQTPETLTPLRRSSRHVSRKINLGNDPIDLPGKESVEEINLIRKPRKRTNDIVVAEKSKKKKIDPEVSFSPVSPIRSETKKTKKKKRVYYNKVEFDETEFEIGDDVYVKRTEDANPDEEEEEDPEIEDCQICFKSHTNTIMIECDDCLGGFHLNCLKPPLKEVPEGDWICQFCEVKKSGQTLVVVPKPPEGKKLARTMKEKLLSSDLWAARIEKLWKEVDDGVYWIRARWYMIPEETVLGRQRHNLKRELYLTNDFADIEMECVLRHCFVKCPKEFSKASNDGDDVFLCEYEYDVHWGSFKRVAELADGDEDSDQEWNGRKEEEIDYSDEEIEFDDEESVRGVSKSKRGGANSRKGRFFGLEKVGMKRIPEHVRCHKQSELEKAKATLLLATRPKSLPCRSKEMEEITAFIKGSISDDQCLGRCMYIHGVPGTGKTISVLSVMKNLKAEVEAGSVSPYCFVEINGLKLASPENIYSVIYEGLSGHRVGWKKALQSLNERFAEGKKIGKENEKPCILLIDELDVLVTRNQSVLYNILDWPTKPNSKLVVLGIANTMDLPEKLLPRISSRMGIQRLCFGPYNHRQLQEIISTRLEGINAFEKTAIEFASRKVAAISGDARRALEICRRAAEVADYRLKKSNISAKSQLVIMADVEVAIQEMFQAPHIQVMKSVSKLSRIFLTAMVHELYKTGMAETSFDRVATTVSSICLTNGEAFPGWDILLKIGCDLGECRIVLCEPGEKHRLQKLQLNFPSDDVAFALKDNKDLPWLANYL.

The span at 1 to 47 (MASSLSSKAKTFKSPTKTPTKMYRKSYLSPSSTSLTPPQTPETLTPL) shows a compositional bias: low complexity. The disordered stretch occupies residues 1–69 (MASSLSSKAK…LGNDPIDLPG (69 aa)). The segment at 160-185 (DPEIEDCQICFKSHTNTIMIECDDCL) is histone H3 binding. The segment at 163 to 213 (IEDCQICFKSHTNTIMIECDDCLGGFHLNCLKPPLKEVPEGDWICQFCEVK) adopts a PHD-type zinc-finger fold. The Zn(2+) site is built by cysteine 166, cysteine 169, cysteine 181, cysteine 184, histidine 189, and cysteine 192. Positions 201-205 (PEGDW) are histone H3 binding. The Zn(2+) site is built by cysteine 207 and cysteine 210. Residues 223 to 341 (PKPPEGKKLA…VHWGSFKRVA (119 aa)) form the BAH domain. The segment at 316-321 (ASNDGD) is histone H3 binding. Positions 431 to 799 (PKSLPCRSKE…DDVAFALKDN (369 aa)) are necessary and sufficient for ORC complex assembly. Residues 466 to 473 (GVPGTGKT) and 466 to 474 (GVPGTGKTI) contribute to the ATP site. Residues aspartate 556 and glutamate 557 each coordinate Mg(2+). 3 residues coordinate ATP: glutamate 557, asparagine 590, and arginine 655.

This sequence belongs to the ORC1 family. In terms of assembly, component of the origin recognition complex (ORC) composed of at least ORC1 (ORC1A or ORC1B), ORC2, ORC3, ORC4, ORC5 and ORC6. ORC is regulated in a cell-cycle and development dependent manner. It is sequentially assembled at the exit from anaphase of mitosis and disassembled as cells enter S phase. Interacts directly with ORC2, ORC3, ORC4 and ORC5. Binds mostly unmodified histone H3, and, with lower efficiency, H3K4me1 H3K4me2 and H3K4me3. As to expression, follow a cell-cycle regulation with a peak at the G1/S-phase. Mostly expressed in siliques, flowers and flower buds, and, to a lower extent, in roots, leaves and stems.

The protein resides in the nucleus. In terms of biological role, essential protein. Component of the origin recognition complex (ORC) that binds origins of replication. It has a role in both chromosomal replication and mating type transcriptional silencing. Binds to the ARS consensus sequence (ACS) of origins of replication. H3K4me3 effector that positively regulates the transcription of a subset of genes. The polypeptide is Origin of replication complex subunit 1A (Arabidopsis thaliana (Mouse-ear cress)).